Here is a 1216-residue protein sequence, read N- to C-terminus: Sodium/potassium/calcium exchanger 1 (1216 aa).

Residues 1 to 446 (MGKLIRMGAQ…DLFSVEERRQ (446 aa)) lie on the Extracellular side of the membrane. Residues 94-196 (EATAGRDGTP…KYSPSPLGRM (103 aa)) form a disordered region. Composition is skewed to polar residues over residues 110-135 (NTPS…TPTG) and 144-166 (SATP…SYTR). N-linked (GlcNAc...) asparagine glycosylation is found at asparagine 290 and asparagine 303. A helical membrane pass occupies residues 447-467 (GWVVLHIFGMMYVFVALAIVC). At 468–491 (DEYFVPALGVITDKLQISEDVAGA) the chain is on the cytoplasmic side. The Alpha-1 repeat unit spans residues 488-528 (VAGATFMAAGGSAPELFTSLIGVFISHSNVGIGTIVGSAVF). The helical transmembrane segment at 492–512 (TFMAAGGSAPELFTSLIGVFI) threads the bilayer. Over 513–518 (SHSNVG) the chain is Extracellular. A helical membrane pass occupies residues 519-539 (IGTIVGSAVFNILFVIGTCAL). Residues 540 to 557 (FSREILNLTWWPLFRDIT) lie on the Cytoplasmic side of the membrane. The chain crosses the membrane as a helical span at residues 558-578 (FYIFDLMMLILFFLDSLIAWW). Glutamate 579 is a topological domain (extracellular). The chain crosses the membrane as a helical span at residues 580–600 (SVLLLLAYAFYVFTMKWNQQL). At 601–1024 (ELWVKEQLNK…SLEWPETRRK (424 aa)) the chain is on the cytoplasmic side. A Phosphoserine modification is found at serine 652. Residues 677–1018 (GEARPSKDKE…ENEQPLSLEW (342 aa)) form a disordered region. Residues 702–712 (AESKPEEEPAK) are compositionally biased toward basic and acidic residues. Threonine 717 is subject to Phosphothreonine. The stretch at 796-811 (DEDEGEIQAEGGEVKG) is one 1; approximate repeat. The segment at 796 to 928 (DEDEGEIQAE…QAGEAGEVEG (133 aa)) is 8 X 17 AA tandem repeats of D-E-D-E-G-E-I-Q-A-G-E-[GA]-G-E-V-[EK]-G. 6 consecutive repeat copies span residues 812 to 828 (DEDE…EVEG), 829 to 845 (DEDE…EVEG), 846 to 862 (DEDE…EVEG), 863 to 879 (DEDE…EVEG), 880 to 896 (DEDE…EVEG), and 897 to 913 (DEDE…EVKG). Composition is skewed to acidic residues over residues 824-834 (GEVEGDEDEGE), 841-851 (GEVEGDEDEGE), 858-868 (GEVEGDEDEGE), 875-885 (GEVEGDEDEGE), 892-902 (GEVEGDEDEGE), 924-941 (GEVE…DEGE), and 981-1011 (GDSE…EENE). The stretch at 914 to 928 (DEGEIQAGEAGEVEG) is one 8; approximate repeat. A helical membrane pass occupies residues 1025 to 1045 (QAIYLFLLPIVFPLWLTVPDV). At 1046–1052 (RRLEAKK) the chain is on the extracellular side. The chain crosses the membrane as a helical span at residues 1053–1073 (FFVITFLGSILWIAMFSYLMV). The Cytoplasmic segment spans residues 1074-1088 (WWAHQVGETIGISEE). Residues 1089 to 1109 (IMGLTILAAGTSIPDLITSVI) traverse the membrane as a helical segment. An Alpha-2 repeat occupies 1096–1127 (AAGTSIPDLITSVIVARKGLGDMAVSSSVGSN). Residues 1110 to 1127 (VARKGLGDMAVSSSVGSN) are Extracellular-facing. The helical transmembrane segment at 1128–1148 (IFDITVGLPLPWMLFSLINGL) threads the bilayer. The Cytoplasmic segment spans residues 1149 to 1157 (QPVAVSSNG). Residues 1158 to 1178 (LFCAIVLLFLMLLFVISSIAL) traverse the membrane as a helical segment. The Extracellular segment spans residues 1179-1185 (CKWRMNK). A helical membrane pass occupies residues 1186–1206 (ILGFTMFLLYFVFLIISVMLE). Over 1207–1216 (DRIISCPVSV) the chain is Cytoplasmic.

The protein belongs to the Ca(2+):cation antiporter (CaCA) (TC 2.A.19) family. SLC24A subfamily. Post-translationally, the uncleaved signal sequence is required for efficient membrane targeting and proper membrane integration and topology. In terms of processing, glycosylated. Retina.

The protein resides in the cell membrane. It catalyses the reaction Ca(2+)(out) + K(+)(out) + 4 Na(+)(in) = Ca(2+)(in) + K(+)(in) + 4 Na(+)(out). Functionally, calcium, potassium:sodium antiporter that transports 1 Ca(2+) and 1 K(+) in exchange for 4 Na(+). Critical component of the visual transduction cascade, controlling the calcium concentration of outer segments during light and darkness. Light causes a rapid lowering of cytosolic free calcium in the outer segment of both retinal rod and cone photoreceptors and the light-induced lowering of calcium is caused by extrusion via this protein which plays a key role in the process of light adaptation. This chain is Sodium/potassium/calcium exchanger 1 (SLC24A1), found in Bos taurus (Bovine).